Here is an 822-residue protein sequence, read N- to C-terminus: General transcription factor 3C polypeptide 4 (822 aa).

Met-1 bears the N-acetylmethionine mark. The tract at residues 1–41 (MNTADQARVGPADDGPAPSGEEEGEGGGEAGGKEPAADAAP) is disordered. Ser-19 is modified (phosphoserine). Residue Lys-225 forms a Glycyl lysine isopeptide (Lys-Gly) (interchain with G-Cter in SUMO2) linkage. Residues Ser-604 and Ser-611 each carry the phosphoserine modification. The interval 608-663 (LVDSPGMGNADDEQQEEGTSSKQVVKQGLQERSKEGDVEEPTDDSLPTTGDAGGRE) is disordered. Lys-629 participates in a covalent cross-link: Glycyl lysine isopeptide (Lys-Gly) (interchain with G-Cter in SUMO2). Position 652 is a phosphoserine (Ser-652).

This sequence belongs to the TFIIIC subunit 4 family. As to quaternary structure, part of the TFIIIC subcomplex TFIIIC2, consisting of six subunits, GTF3C1, GTF3C2, GTF3C3, GTF3C4, GTF3C5 and GTF3C6. Interacts with BRF1, GTF3C1, GTF3C2, GTF3C5, GTF3C6, POLR3C and POLR3F.

It is found in the nucleus. The catalysed reaction is L-lysyl-[protein] + acetyl-CoA = N(6)-acetyl-L-lysyl-[protein] + CoA + H(+). Functionally, essential for RNA polymerase III to make a number of small nuclear and cytoplasmic RNAs, including 5S RNA, tRNA, and adenovirus-associated (VA) RNA of both cellular and viral origin. Has histone acetyltransferase activity (HAT) with unique specificity for free and nucleosomal H3. May cooperate with GTF3C5 in facilitating the recruitment of TFIIIB and RNA polymerase through direct interactions with BRF1, POLR3C and POLR3F. May be localized close to the A box. This chain is General transcription factor 3C polypeptide 4 (GTF3C4), found in Homo sapiens (Human).